Reading from the N-terminus, the 185-residue chain is Homeobox-leucine zipper protein ATHB-22 (185 aa).

A DNA-binding region (homeobox) is located at residues 76–135; the sequence is TSEQLKFLERSFQEEIKLNPDRKMKLNPDRKMKLSKELGLQPRQIAVWFQNRKARWKNKQ. The leucine-zipper stretch occupies residues 136 to 164; it reads LEHLYESLRQEFDIVSREKELLQEELIQL.

This sequence belongs to the HD-ZIP homeobox family. Class I subfamily. In terms of tissue distribution, expressed in siliques.

It is found in the nucleus. In terms of biological role, probable transcription factor. The sequence is that of Homeobox-leucine zipper protein ATHB-22 (ATHB-22) from Arabidopsis thaliana (Mouse-ear cress).